The chain runs to 149 residues: Calmodulin (149 aa).

A2 bears the N-acetylalanine mark. 4 consecutive EF-hand domains span residues 8–43 (EQIS…LGQN), 44–79 (PTEA…KMRD), 81–116 (DSEE…LGEK), and 117–149 (LTDN…MLSK). Ca(2+) contacts are provided by D21, D23, D25, T27, E32, D57, D59, N61, T63, E68, D94, D96, N98, Y100, E105, D130, D132, D134, Q136, and E141.

The protein belongs to the calmodulin family.

Functionally, calmodulin mediates the control of a large number of enzymes, ion channels and other proteins by Ca(2+). Among the enzymes to be stimulated by the calmodulin-Ca(2+) complex are a number of protein kinases and phosphatases. The chain is Calmodulin (CMD1) from Pleurotus ostreatus (Oyster mushroom).